Here is a 212-residue protein sequence, read N- to C-terminus: Lysozyme g-like protein 2 (212 aa).

Positions 1–19 are cleaved as a signal peptide; sequence MLSSVVFWGLIALIGTSRG. 2 cysteine pairs are disulfide-bonded: Cys39–Cys92 and Cys53–Cys61. The active site involves Glu105.

The protein belongs to the glycosyl hydrolase 23 family. As to expression, strong expression detected in the eye and weak expression in the testis. No expression is observed in any other tissues.

It localises to the secreted. Functionally, may act as a potent antibacterial protein that may play a role in the innate immunity. The protein is Lysozyme g-like protein 2 (LYG2) of Homo sapiens (Human).